A 321-amino-acid chain; its full sequence is tRNA U34 carboxymethyltransferase (321 aa).

Residues lysine 90, tryptophan 104, lysine 109, glycine 129, 151 to 153, 180 to 181, methionine 195, tyrosine 199, and arginine 314 contribute to the carboxy-S-adenosyl-L-methionine site; these read DPT and IE.

Belongs to the class I-like SAM-binding methyltransferase superfamily. CmoB family. As to quaternary structure, homotetramer.

It carries out the reaction carboxy-S-adenosyl-L-methionine + 5-hydroxyuridine(34) in tRNA = 5-carboxymethoxyuridine(34) in tRNA + S-adenosyl-L-homocysteine + H(+). In terms of biological role, catalyzes carboxymethyl transfer from carboxy-S-adenosyl-L-methionine (Cx-SAM) to 5-hydroxyuridine (ho5U) to form 5-carboxymethoxyuridine (cmo5U) at position 34 in tRNAs. This is tRNA U34 carboxymethyltransferase from Histophilus somni (strain 2336) (Haemophilus somnus).